The following is a 479-amino-acid chain: FAD-dependent monooxygenase sdcF (479 aa).

In terms of domain architecture, FAD-binding PCMH-type spans 40–213 (AQLPPSCFVL…TLFDMEAFST (174 aa)). Pros-8alpha-FAD histidine is present on H79.

This sequence belongs to the oxygen-dependent FAD-linked oxidoreductase family. FAD is required as a cofactor.

Its pathway is secondary metabolite biosynthesis. Its function is as follows. FAD-dependent monooxygenase; part of the gene cluster that mediates the biosynthesis of the polyenes aspernidgulenes. The carbon backbone of aspernidgulenes is synthesized by the HR-PKS sdgA, which accepts acetyl-CoA as the starter unit and performs malonyl-CoA extensions as well as regioselective methylation and reduction. The resulting nonaketide offloads the HR-PKS by intramolecular lactonization to yield the 5,6-dihydro-alpha-pyrone-containing hexaenoic acids preaspernidgulene A1 and A2. The FAD-dependent monooxygenase sdgC then installs the first epoxide on the penultimate double bond. Subsequently, the FAD-dependent monooxygenase sdgF presumably generates a ketone intermediate through Meinwald rearrangement involving a hydride shift. Next, sdgC introduces another epoxide on the last olefin of the ketone intermediate after E/Z isomerization. The epoxide hydrolase sdgD then catalyzes stereospecific cyclization of the 5,6-dihydro-alpha-pyrone and opening of the epoxide ring to form an oxygenated trimethylcyclopentanone and an oxabicyclo[2.2.1]heptane unit. Finally, the bicyclic unit undergoes hydrolytic cleavage, either spontaneously or catalyzed by sdgD, to assemble the dimethyl-gamma-lactone moiety in aspernidgulene A1. In Emericella nidulans (strain FGSC A4 / ATCC 38163 / CBS 112.46 / NRRL 194 / M139) (Aspergillus nidulans), this protein is FAD-dependent monooxygenase sdcF.